The sequence spans 69 residues: Light-harvesting protein B-1015 beta chain (69 aa).

Residues 2 to 21 lie on the Cytoplasmic side of the membrane; it reads ADLKPSLTGLTEEEAKEFHG. 2 residues coordinate a bacteriochlorophyll: His-20 and His-38. Residues 22-44 traverse the membrane as a helical segment; it reads IFVTSTVLYLATAVIVHYLVWTA. Residues 45-56 are Periplasmic-facing; the sequence is RPWIAPIPKGWV. The propeptide occupies 57-69; the sequence is NLEGVQSALSYLV.

Belongs to the antenna complex beta subunit family. As to quaternary structure, the core complex is formed by different alpha and beta chains, binding bacteriochlorophyll molecules, and arranged most probably in tetrameric structures disposed around the reaction center. The non-pigmented gamma chains may constitute additional components.

It is found in the cell inner membrane. Functionally, antenna complexes are light-harvesting systems, which transfer the excitation energy to the reaction centers. The protein is Light-harvesting protein B-1015 beta chain (pufB) of Blastochloris viridis (Rhodopseudomonas viridis).